A 173-amino-acid polypeptide reads, in one-letter code: Succinate dehydrogenase assembly factor 3, mitochondrial (173 aa).

A mitochondrion-targeting transit peptide spans methionine 1–aspartate 59. The segment at phenylalanine 149 to glutamate 173 is disordered. The span at glutamate 152–alanine 162 shows a compositional bias: basic and acidic residues.

It belongs to the complex I LYR family. SDHAF3 subfamily. As to quaternary structure, interacts with the iron-sulfur protein subunit within the SDH catalytic dimer.

It localises to the mitochondrion matrix. Plays an essential role in the assembly of succinate dehydrogenase (SDH), an enzyme complex (also referred to as respiratory complex II) that is a component of both the tricarboxylic acid (TCA) cycle and the mitochondrial electron transport chain, and which couples the oxidation of succinate to fumarate with the reduction of ubiquinone (coenzyme Q) to ubiquinol. Promotes maturation of the iron-sulfur protein subunit of the SDH catalytic dimer, protecting it from the deleterious effects of oxidants. May act together with SDHAF1. This chain is Succinate dehydrogenase assembly factor 3, mitochondrial, found in Mycosarcoma maydis (Corn smut fungus).